The primary structure comprises 151 residues: Sec-independent protein translocase protein TatB (151 aa).

The chain crosses the membrane as a helical span at residues 1-21 (MFDVSFTELMVIGVIALVVIG). Positions 66–151 (MDETARSMQT…DKTPPTGSAT (86 aa)) are disordered. Residues 93-103 (AELDDTARDAS) are compositionally biased toward basic and acidic residues. Composition is skewed to low complexity over residues 109 to 122 (ADAP…VASD) and 133 to 151 (APPA…GSAT).

The protein belongs to the TatB family. In terms of assembly, the Tat system comprises two distinct complexes: a TatABC complex, containing multiple copies of TatA, TatB and TatC subunits, and a separate TatA complex, containing only TatA subunits. Substrates initially bind to the TatABC complex, which probably triggers association of the separate TatA complex to form the active translocon.

It localises to the cell inner membrane. Functionally, part of the twin-arginine translocation (Tat) system that transports large folded proteins containing a characteristic twin-arginine motif in their signal peptide across membranes. Together with TatC, TatB is part of a receptor directly interacting with Tat signal peptides. TatB may form an oligomeric binding site that transiently accommodates folded Tat precursor proteins before their translocation. The sequence is that of Sec-independent protein translocase protein TatB from Bordetella parapertussis (strain 12822 / ATCC BAA-587 / NCTC 13253).